The primary structure comprises 245 residues: Probable phosphatase YcdX (245 aa).

Residues His-7, His-9, His-15, His-40, Glu-73, His-101, His-131, Asp-192, and His-194 each coordinate Zn(2+).

This sequence belongs to the PHP family. In terms of assembly, homotrimer. The cofactor is Zn(2+).

This chain is Probable phosphatase YcdX, found in Escherichia coli O17:K52:H18 (strain UMN026 / ExPEC).